Here is a 763-residue protein sequence, read N- to C-terminus: MSELLSFALFLASVLIYAWKAGRNTWWFAATLTVLGLFVVLNITLFASDYFTGDGINDAVLYTLTNSLTGAGVSKYILPGIGIVLGLTAVFGALGWILRRRRHHPHHFGYSLLALLLALGSVDASPAFRQITELVKSQSRDGDPDFAAYYKEPSKTIPDPKLNLVYIYGESLERTYFDNEAFPDLTPELGALKNEGLDFSHTQQLPGTDYTIAGMVASQCGIPLFAPFEGNASASVSSFFPQNICLGDILKNSGYQNYFVQGANLRFAGKDVFLKSHGFDHLYGSEELKSVVADPHYRNDWGFYDDTVLDEAWKKFEELSRSGQRFSLFTLTVDTHHPDGFISRTCNRKKYDFDGKPNQSFSAVSCSQENIATFINKIKASPWFKDTVIVVSSDHLAMNNTAWKYLNKQDRNNLFFVIRGDKPQQKTLAVKRNTMDNGATVLDILGGDNYLGLGRSSLSGQSMSEIFLNIKEKTLAWKPDIIRLWKFPKEMKEFTIDQQKNMIAFSGSHFRLPLLLRVSDKRVEPLPESEYSAPLRFQLADFAPRDNFVWVDSCYKMAQLWAPELALSTDWCVSQGQLGGQQIVQHVDKTTWKSKTAFKDTVIDMARYKGNVDTLKIVDNDIRYKADSFIFNVAGAPEEVKQFSGISRPESWGRWSNAQLGDEVKIEYKHPLPKKFDLVITAKAYGNNASRPIPVRVGNEEQTLVLGNEVTTTTLHFDNPTDADTLVIVPPEPVSTNEGNILGHSPRKLGIGMVEIKVVEREG.

Helical transmembrane passes span 4–19 (LLSFALFLASVLIYAW), 26–48 (WWFAATLTVLGLFVVLNITLFAS), 76–98 (YILPGIGIVLGLTAVFGALGWIL), and 105–127 (PHHFGYSLLALLLALGSVDASPA).

Belongs to the OpgB family.

Its subcellular location is the cell inner membrane. The enzyme catalyses a phosphatidylglycerol + a membrane-derived-oligosaccharide D-glucose = a 1,2-diacyl-sn-glycerol + a membrane-derived-oligosaccharide 6-(glycerophospho)-D-glucose.. It participates in glycan metabolism; osmoregulated periplasmic glucan (OPG) biosynthesis. Functionally, transfers a phosphoglycerol residue from phosphatidylglycerol to the membrane-bound nascent glucan backbones. This chain is Phosphoglycerol transferase I, found in Shigella flexneri.